We begin with the raw amino-acid sequence, 253 residues long: Imidazole glycerol phosphate synthase subunit HisF (253 aa).

Active-site residues include Asp-11 and Asp-130.

This sequence belongs to the HisA/HisF family. As to quaternary structure, heterodimer of HisH and HisF.

The protein resides in the cytoplasm. It carries out the reaction 5-[(5-phospho-1-deoxy-D-ribulos-1-ylimino)methylamino]-1-(5-phospho-beta-D-ribosyl)imidazole-4-carboxamide + L-glutamine = D-erythro-1-(imidazol-4-yl)glycerol 3-phosphate + 5-amino-1-(5-phospho-beta-D-ribosyl)imidazole-4-carboxamide + L-glutamate + H(+). It participates in amino-acid biosynthesis; L-histidine biosynthesis; L-histidine from 5-phospho-alpha-D-ribose 1-diphosphate: step 5/9. In terms of biological role, IGPS catalyzes the conversion of PRFAR and glutamine to IGP, AICAR and glutamate. The HisF subunit catalyzes the cyclization activity that produces IGP and AICAR from PRFAR using the ammonia provided by the HisH subunit. This chain is Imidazole glycerol phosphate synthase subunit HisF, found in Clostridium botulinum (strain 657 / Type Ba4).